The chain runs to 445 residues: tRNA-2-methylthio-N(6)-dimethylallyladenosine synthase (445 aa).

The region spanning 4-121 is the MTTase N-terminal domain; that stretch reads NKIYIKTWGC…LPNMIQEVKK (118 aa). [4Fe-4S] cluster-binding residues include Cys13, Cys50, Cys84, Cys158, Cys162, and Cys165. Residues 144 to 376 enclose the Radical SAM core domain; that stretch reads RKPKVTAFVS…QTLIRNNTTM (233 aa). The region spanning 379–442 is the TRAM domain; sequence QKMLGSIQSV…PNSLRGSYEK (64 aa).

It belongs to the methylthiotransferase family. MiaB subfamily. As to quaternary structure, monomer. [4Fe-4S] cluster serves as cofactor.

It localises to the cytoplasm. The enzyme catalyses N(6)-dimethylallyladenosine(37) in tRNA + (sulfur carrier)-SH + AH2 + 2 S-adenosyl-L-methionine = 2-methylsulfanyl-N(6)-dimethylallyladenosine(37) in tRNA + (sulfur carrier)-H + 5'-deoxyadenosine + L-methionine + A + S-adenosyl-L-homocysteine + 2 H(+). Its function is as follows. Catalyzes the methylthiolation of N6-(dimethylallyl)adenosine (i(6)A), leading to the formation of 2-methylthio-N6-(dimethylallyl)adenosine (ms(2)i(6)A) at position 37 in tRNAs that read codons beginning with uridine. This is tRNA-2-methylthio-N(6)-dimethylallyladenosine synthase from Buchnera aphidicola subsp. Baizongia pistaciae (strain Bp).